We begin with the raw amino-acid sequence, 300 residues long: MAVVTMKQLLDSGTHFGHQTRRWNPKMKRFIFTDRNGIYIIDLQQTLTYIDKAYEFVKETVAHGGTVLFVGTKKQAQESIAAEATRVGMPYVNQRWLGGMLTNFTTVHKRLLRLKELEAMEQTGGFEGRTKKEILMLTREMTKLDRTLGGIRDMAKVPSAVWVVDTNKEHLAVAEARKLNIPVIAILDTNCDPDLVDYPIPGNDDAIRSAALLTKVVASAVAEGVQARAGLSADKDAKPEAGAGEPLAEWEQELLSQAAPAAEAAPAAEAAPAAEAAPAAEAQAAPAAEAPAAEAPSTEA.

A disordered region spans residues 228-300; it reads RAGLSADKDA…PAAEAPSTEA (73 aa). Over residues 258 to 300 the composition is skewed to low complexity; that stretch reads AAPAAEAAPAAEAAPAAEAAPAAEAQAAPAAEAPAAEAPSTEA.

Belongs to the universal ribosomal protein uS2 family.

In Rhodococcus jostii (strain RHA1), this protein is Small ribosomal subunit protein uS2.